A 330-amino-acid chain; its full sequence is MNENLNGILNVYKEAGWTSFDVVAKLRGILKTKKIGHGGTLDPSVTGVLPIAVGKSTRLLEYMEAAGKIYEGQVTIGFSTETEDADGAIVNQTPVKNNLTESEIDSAMSHFVGKIKQIPPMYSAVKINGKKLYEYARAGQTIERPAREITIKSFVRTSPIDWNKEEGLVTFSFKVECSKGTYVRTLAVDLADSLGYAGHMSKLQRTASNGLLIKDAIKLSKIEEIKESGKLSTILYPAEYAVSDLPRVNLTTVQFDMARVGKKFAQSDWTNEVETADSSVNKTKQQEYLLTDLSLLTTEKFAAFYNDKLVAVYMKHPEKEGIWKPNKVLV.

The Nucleophile role is filled by D42.

This sequence belongs to the pseudouridine synthase TruB family. Type 1 subfamily.

The catalysed reaction is uridine(55) in tRNA = pseudouridine(55) in tRNA. In terms of biological role, responsible for synthesis of pseudouridine from uracil-55 in the psi GC loop of transfer RNAs. The polypeptide is tRNA pseudouridine synthase B (Lactococcus lactis subsp. cremoris (strain MG1363)).